Consider the following 76-residue polypeptide: Large ribosomal subunit protein uL29 (76 aa).

The protein belongs to the universal ribosomal protein uL29 family.

The chain is Large ribosomal subunit protein uL29 from Corynebacterium diphtheriae (strain ATCC 700971 / NCTC 13129 / Biotype gravis).